We begin with the raw amino-acid sequence, 157 residues long: Ribonuclease H (157 aa).

The RNase H type-1 domain maps to 2-145 (NAEISKIYTD…CDAIARAFAA (144 aa)). Positions 11, 50, 74, and 137 each coordinate Mg(2+).

It belongs to the RNase H family. Monomer. The cofactor is Mg(2+).

The protein resides in the cytoplasm. The catalysed reaction is Endonucleolytic cleavage to 5'-phosphomonoester.. Functionally, endonuclease that specifically degrades the RNA of RNA-DNA hybrids. This chain is Ribonuclease H, found in Cyanothece sp. (strain PCC 7425 / ATCC 29141).